A 523-amino-acid chain; its full sequence is Cyclin-dependent kinase 17 (523 aa).

At serine 9 the chain carries Phosphoserine. A disordered region spans residues 31 to 55 (IEESSSKDNEPIVKNGRPPTSHSMH). Phosphoserine is present on residues serine 80, serine 92, and serine 105. The disordered stretch occupies residues 103-123 (MGSDGESDQASGTSSDEVQSP). A compositionally biased stretch (polar residues) spans 110–123 (DQASGTSSDEVQSP). Phosphoserine is present on residues serine 137, serine 146, serine 165, and serine 180. Residues 192-473 (YIKLEKLGEG…AEEAMKHVYF (282 aa)) form the Protein kinase domain. ATP-binding positions include 198-206 (LGEGTYATV) and lysine 221. Aspartate 313 (proton acceptor) is an active-site residue.

This sequence belongs to the protein kinase superfamily. CMGC Ser/Thr protein kinase family. CDC2/CDKX subfamily. Found in a complex containing CABLES1, CDK16 and TDRD7. Interacts with TDRD7. Brain specific. Within the brain it is concentrated in the neuronal layers of the hippocampus and olfactory bulb, which mostly consist of post-mitotic neurons.

The catalysed reaction is L-seryl-[protein] + ATP = O-phospho-L-seryl-[protein] + ADP + H(+). The enzyme catalyses L-threonyl-[protein] + ATP = O-phospho-L-threonyl-[protein] + ADP + H(+). May play a role in terminally differentiated neurons. Has a Ser/Thr-phosphorylating activity for histone H1. The protein is Cyclin-dependent kinase 17 (Cdk17) of Rattus norvegicus (Rat).